We begin with the raw amino-acid sequence, 524 residues long: GMP synthase [glutamine-hydrolyzing] (524 aa).

The 190-residue stretch at 7 to 196 (PVLVVDFGAQ…LHELAGIPAS (190 aa)) folds into the Glutamine amidotransferase type-1 domain. Cys84 serves as the catalytic Nucleophile. Residues His170 and Glu172 contribute to the active site. One can recognise a GMPS ATP-PPase domain in the interval 197 to 398 (WTPSNIADVL…LGLPEEIVAR (202 aa)). Residue 224–230 (SGGVDSA) coordinates ATP.

Homodimer.

The catalysed reaction is XMP + L-glutamine + ATP + H2O = GMP + L-glutamate + AMP + diphosphate + 2 H(+). Its pathway is purine metabolism; GMP biosynthesis; GMP from XMP (L-Gln route): step 1/1. Catalyzes the synthesis of GMP from XMP. This chain is GMP synthase [glutamine-hydrolyzing], found in Nocardia farcinica (strain IFM 10152).